A 77-amino-acid polypeptide reads, in one-letter code: Putative antitoxin MazE7 (77 aa).

Positions 49-77 (REASHAETTTQAVRDEDREWEGTVGDGLG) are disordered.

In terms of assembly, forms a complex with cognate toxin MazF7.

In terms of biological role, antitoxin component of a type II toxin-antitoxin (TA) system. The polypeptide is Putative antitoxin MazE7 (mazE7) (Mycobacterium tuberculosis (strain CDC 1551 / Oshkosh)).